The primary structure comprises 504 residues: Maturase K (504 aa).

It belongs to the intron maturase 2 family. MatK subfamily.

It is found in the plastid. Its subcellular location is the chloroplast. Its function is as follows. Usually encoded in the trnK tRNA gene intron. Probably assists in splicing its own and other chloroplast group II introns. The sequence is that of Maturase K from Nepenthes distillatoria (Pitcher plant).